The sequence spans 214 residues: Cytochrome b (214 aa).

Transmembrane regions (helical) follow at residues F31–I51, W75–I96, W111–L131, and F176–M196. Heme b contacts are provided by H81 and H95. Heme b contacts are provided by H180 and H194. Position 199 (H199) interacts with a ubiquinone.

This sequence belongs to the cytochrome b family. In terms of assembly, the cytochrome bc1 complex contains 3 respiratory subunits (MT-CYB, CYC1 and UQCRFS1), 2 core proteins (UQCRC1 and UQCRC2) and probably 6 low-molecular weight proteins. Requires heme b as cofactor.

It localises to the mitochondrion inner membrane. Its function is as follows. Component of the ubiquinol-cytochrome c reductase complex (complex III or cytochrome b-c1 complex) that is part of the mitochondrial respiratory chain. The b-c1 complex mediates electron transfer from ubiquinol to cytochrome c. Contributes to the generation of a proton gradient across the mitochondrial membrane that is then used for ATP synthesis. This chain is Cytochrome b (MT-CYB), found in Elapsoidea semiannulata (Angolan garter snake).